The following is a 207-amino-acid chain: Large ribosomal subunit protein uL4 (207 aa).

The disordered stretch occupies residues histidine 49–isoleucine 78.

Belongs to the universal ribosomal protein uL4 family. Part of the 50S ribosomal subunit.

Its function is as follows. One of the primary rRNA binding proteins, this protein initially binds near the 5'-end of the 23S rRNA. It is important during the early stages of 50S assembly. It makes multiple contacts with different domains of the 23S rRNA in the assembled 50S subunit and ribosome. Forms part of the polypeptide exit tunnel. In Streptococcus thermophilus (strain CNRZ 1066), this protein is Large ribosomal subunit protein uL4.